The sequence spans 93 residues: CRISPR-associated endoribonuclease Cas2 (93 aa).

Asp-13 lines the Mg(2+) pocket.

The protein belongs to the CRISPR-associated endoribonuclease Cas2 protein family. As to quaternary structure, homodimer, forms a heterotetramer with a Cas1 homodimer. Mg(2+) is required as a cofactor.

CRISPR (clustered regularly interspaced short palindromic repeat), is an adaptive immune system that provides protection against mobile genetic elements (viruses, transposable elements and conjugative plasmids). CRISPR clusters contain sequences complementary to antecedent mobile elements and target invading nucleic acids. CRISPR clusters are transcribed and processed into CRISPR RNA (crRNA). Functions as a ssRNA-specific endoribonuclease. Involved in the integration of spacer DNA into the CRISPR cassette. This Korarchaeum cryptofilum (strain OPF8) protein is CRISPR-associated endoribonuclease Cas2.